We begin with the raw amino-acid sequence, 172 residues long: Ribosome maturation factor RimM (172 aa).

Positions 96–168 (DGEFYYHEII…RVDVEILEGL (73 aa)) constitute a PRC barrel domain.

This sequence belongs to the RimM family. In terms of assembly, binds ribosomal protein uS19.

The protein resides in the cytoplasm. Its function is as follows. An accessory protein needed during the final step in the assembly of 30S ribosomal subunit, possibly for assembly of the head region. Essential for efficient processing of 16S rRNA. May be needed both before and after RbfA during the maturation of 16S rRNA. It has affinity for free ribosomal 30S subunits but not for 70S ribosomes. The sequence is that of Ribosome maturation factor RimM from Streptococcus pneumoniae serotype 4 (strain ATCC BAA-334 / TIGR4).